We begin with the raw amino-acid sequence, 592 residues long: Alpha-1,3-galactosidase B (592 aa).

The first 14 residues, 1-14 (MKLLSVLSLSLVLS), serve as a signal peptide directing secretion. A lipid anchor (N-palmitoyl cysteine) is attached at cysteine 15. Cysteine 15 carries S-diacylglycerol cysteine lipidation. 3 PbH1 repeats span residues 429–451 (TPEVLFSGNVIRNNRARGSLFST), 452–474 (PRKTIVENNLFDHTSGAAILLCG), and 485–538 (CRHV…VIED).

Belongs to the glycosyl hydrolase 110 family. B subfamily.

The protein resides in the cell membrane. It carries out the reaction Hydrolysis of terminal, non-reducing branched (1-&gt;3)-alpha-D-galactosidic residues, producing free D-galactose.. The catalysed reaction is Hydrolysis of terminal, non-reducing linear (1-&gt;3)-alpha-D-galactosidic residues, producing free D-galactose.. The enzyme catalyses Hydrolysis of terminal, non-reducing alpha-D-galactose residues in alpha-D-galactosides, including galactose oligosaccharides, galactomannans and galactolipids.. Alpha-galactosidase. Removes both branched alpha-1,3-linked galactose residues of blood group B antigens and linear alpha-1,3-linked galactose structures. This Phocaeicola vulgatus (strain ATCC 8482 / DSM 1447 / JCM 5826 / CCUG 4940 / NBRC 14291 / NCTC 11154) (Bacteroides vulgatus) protein is Alpha-1,3-galactosidase B (glaB1).